A 675-amino-acid polypeptide reads, in one-letter code: Rho guanine nucleotide exchange factor 37 (675 aa).

Residues 1–26 (MAKHGADEPSSRSGSPDREGRASEDR) form a disordered region. Positions 30 to 213 (HQRLAVRELI…QDVNTNINEY (184 aa)) constitute a DH domain. Positions 254-455 (LKQEAGLIPR…LPHHHVPEPA (202 aa)) constitute a BAR domain. SH3 domains follow at residues 506-569 (GPGK…LYHV) and 602-665 (PTMN…RARS).

In terms of biological role, may act as a guanine nucleotide exchange factor (GEF). The chain is Rho guanine nucleotide exchange factor 37 (ARHGEF37) from Homo sapiens (Human).